The chain runs to 299 residues: Circadian clock oscillator protein KaiA (299 aa).

Residues 9–148 form a psR domain, binds oxidized quinones region; the sequence is SRPQIFICTL…LQLSKACRLP (140 aa). The KaiA N-terminal domain occupies 9-179; the sequence is SRPQIFICTL…RLSQKLKERL (171 aa). The interval 180–188 is flexible linker; that stretch reads GYLGVYYKR. In terms of domain architecture, KaiA C-terminal spans 189–297; sequence NPQQFFHKLT…CEMYRRSIPK (109 aa).

As to quaternary structure, homodimer. The KaiABC complex composition changes during the circadian cycle to control KaiC phosphorylation. Complexes KaiC(6), KaiA(2-4):KaiC(6), KaiB(6):KaiC(6) and KaiC(6):KaiB(6):KaiA(12) are among the most important forms, many form cooperatively. KaiA and CikA bind to the same region of the KaiB(fs) form and therefore compete.

Key component of the KaiABC oscillator complex, which constitutes the main circadian regulator in cyanobacteria. Complex composition changes during the circadian cycle to control KaiC phosphorylation. KaiA stimulates KaiC autophosphorylation, while KaiB sequesters KaiA, leading to KaiC autodephosphorylation. KaiA binding to the KaiC CII domain during the subjective day yields KaiA(2-4):KaiC(6) complexes which stimulate KaiC autophosphorylation. Phospho-Ser-431 KaiC accumulation triggers binding of KaiB during the subjective night to form the KaiB(6):KaiC(6) complex, leading to changes in the output regulators CikA and SasA. KaiB(6):KaiC(6) formation exposes a site for KaiA binding on KaiB that sequesters KaiA from KaiC's CII domain, making the KaiC(6):KaiB(6):KaiA(12) complex resulting in KaiC autodephosphorylation. Complete dephosphorylation of KaiC leads to dissociation of KaiA(2):KaiB(1), completing 1 cycle of the Kai oscillator. In terms of biological role, binds oxidized quinones via the N-terminal PsR domain, allowing it to sense redox changes and possibly mediate clock input. The protein is Circadian clock oscillator protein KaiA of Acaryochloris marina (strain MBIC 11017).